The following is a 2477-amino-acid chain: Non-reducing polyketide synthase mapC (2477 aa).

The segment at 14 to 269 (LLFGPQCSEI…HQQTHREGIQ (256 aa)) is N-terminal acylcarrier protein transacylase domain (SAT). The Ketosynthase family 3 (KS3) domain occupies 403–820 (MPPIAITGMA…GSNAALIVRD (418 aa)). Active-site for beta-ketoacyl synthase activity residues include Cys568, His703, and His742. Residues 930–1233 (LCFGGQNGVT…HRVNLDGSDG (304 aa)) form a malonyl-CoA:ACP transacylase (MAT) domain region. Ser1017 acts as the For acyl/malonyl transferase activity in catalysis. An N-terminal hotdog fold region spans residues 1302–1435 (QERAGLLRKL…GSVSLCNERS (134 aa)). Residues 1302–1612 (QERAGLLRKL…FMSVSIRSLT (311 aa)) enclose the PKS/mFAS DH domain. The product template (PT) domain stretch occupies residues 1307–1611 (LLRKLSDGPE…RFMSVSIRSL (305 aa)). His1336 serves as the catalytic Proton acceptor; for dehydratase activity. Residues 1461-1612 (ASNGLKGSTV…FMSVSIRSLT (152 aa)) form a C-terminal hotdog fold region. The active-site Proton donor; for dehydratase activity is Asp1518. Residues 1651-1725 (DSDLVAVQEM…GLTEHIFPGH (75 aa)) form the Carrier domain. An O-(pantetheine 4'-phosphoryl)serine modification is found at Ser1685. Residues 1882-2117 (PYALEHDLLQ…GFEWVGWTNN (236 aa)) form a methyltransferase (CMeT) domain region. Active-site for thioesterase activity residues include Ser2267 and Asp2421.

The protein resides in the cytoplasm. It is found in the cytosol. The enzyme catalyses 3 malonyl-CoA + acetyl-CoA + S-adenosyl-L-methionine + H(+) = 5-methylorsellinate + S-adenosyl-L-homocysteine + 3 CO2 + 4 CoA. It functions in the pathway secondary metabolite biosynthesis; terpenoid biosynthesis. Its function is as follows. Non-reducing polyketide synthase; part of the gene cluster that mediates the biosynthesis of mycophenolic acid (MPA), the first isolated antibiotic natural product in the world obtained from a culture of Penicillium brevicompactum in 1893. MpaC catalyzes the synthesis of 5-methylorsellinic acid (5MOA) via the condensation of 1 acetyl-CoA starter unit with 3 malonyl-CoA units and one methylation step. The first step of the pathway is the synthesis of 5-methylorsellinic acid (5MOA) by the cytosolic polyketide synthase mpaC. 5MOA is then converted to the phthalide compound 5,7-dihydroxy-4,6-dimethylphthalide (DHMP) by the endoplasmic reticulum-bound cytochrome P450 monooxygenase mpaDE. MpaDE first catalyzes hydroxylation of 5-MOA to 4,6-dihydroxy-2-(hydroxymethyl)-3-methylbenzoic acid (DHMB). MpaDE then acts as a lactone synthase that catalyzes the ring closure to convert DHMB into DHMP. The next step is the prenylation of DHMP by the Golgi apparatus-associated prenyltransferase mpaA to yield farnesyl-DHMP (FDHMP). The ER-bound oxygenase mpaB then mediates the oxidative cleavage the C19-C20 double bond in FDHMP to yield FDHMP-3C via a mycophenolic aldehyde intermediate. The O-methyltransferase mpaG catalyzes the methylation of FDHMP-3C to yield MFDHMP-3C. After the cytosolic methylation of FDHMP-3C, MFDHMP-3C enters into peroxisomes probably via free diffusion due to its low molecular weight. Upon a peroxisomal CoA ligation reaction, catalyzed by a beta-oxidation component enzyme acyl-CoA ligase ACL891, MFDHMP-3C-CoA would then be restricted to peroxisomes for the following beta-oxidation pathway steps. The peroxisomal beta-oxidation machinery than converts MFDHMP-3C-CoA into MPA_CoA, via a beta-oxidation chain-shortening process. Finally mpaH acts as a peroxisomal acyl-CoA hydrolase with high substrate specificity toward MPA-CoA to release the final product MPA. The protein is Non-reducing polyketide synthase mapC of Penicillium roqueforti (strain FM164).